The sequence spans 422 residues: Phagosome assembly factor 1 (422 aa).

It belongs to the PHAF1 family. Interacts with BCAS3; the interaction is requrired for the association with the phagophore.

The protein localises to the cytoplasm. It localises to the preautophagosomal structure. Functionally, plays a regulatory role in autophagic activity. In complex with BCAS3, associates with the autophagosome formation site during both non-selective and selective autophagy. This Homo sapiens (Human) protein is Phagosome assembly factor 1.